A 151-amino-acid polypeptide reads, in one-letter code: Urease accessory protein UreE (151 aa).

Belongs to the UreE family.

It localises to the cytoplasm. Functionally, involved in urease metallocenter assembly. Binds nickel. Probably functions as a nickel donor during metallocenter assembly. The protein is Urease accessory protein UreE of Bacillus cereus (strain ATCC 10987 / NRS 248).